A 205-amino-acid chain; its full sequence is Small ribosomal subunit protein uS4 (205 aa).

The tract at residues 19 to 45 is disordered; the sequence is IWGRPKSPVNRREYGPGQHGQRRKGKL. One can recognise an S4 RNA-binding domain in the interval 94–157; that stretch reads RRLDAVVYRA…KQLAFVLEAS (64 aa).

Part of the 30S ribosomal subunit. Contacts protein S5. The interaction surface between S4 and S5 is involved in control of translational fidelity. In terms of processing, may be methylated on an undetermined residue.

In terms of biological role, one of the primary rRNA binding proteins, it binds directly to 16S rRNA where it nucleates assembly of the body of the 30S subunit. Its function is as follows. With S5 and S12 plays an important role in translational accuracy. The sequence is that of Small ribosomal subunit protein uS4 from Rhodopseudomonas palustris (strain ATCC BAA-98 / CGA009).